The following is a 245-amino-acid chain: tRNA pseudouridine synthase A (245 aa).

Asp-52 functions as the Nucleophile in the catalytic mechanism. Tyr-111 contacts substrate.

Belongs to the tRNA pseudouridine synthase TruA family. Homodimer.

The enzyme catalyses uridine(38/39/40) in tRNA = pseudouridine(38/39/40) in tRNA. Formation of pseudouridine at positions 38, 39 and 40 in the anticodon stem and loop of transfer RNAs. The polypeptide is tRNA pseudouridine synthase A (Rickettsia prowazekii (strain Madrid E)).